The sequence spans 400 residues: Probable peptidoglycan glycosyltransferase FtsW (400 aa).

The Cytoplasmic portion of the chain corresponds to 1-29 (MVIERIKHLASPLQDWVFTPSPKVMFDRQ). The chain crosses the membrane as a helical span at residues 30-50 (LIWIALGLMLTGLVMVASASF). Over 51 to 60 (PISTRLTGQP) the chain is Periplasmic. The chain crosses the membrane as a helical span at residues 61-81 (FHFMMRHMLFVFLALSISSIV). The Cytoplasmic segment spans residues 82–95 (LRIELNKWLKYSSH). Residues 96 to 116 (LLLISLLLLAAVLVVGKSVNG) traverse the membrane as a helical segment. At 117 to 122 (AARWLP) the chain is on the periplasmic side. The chain crosses the membrane as a helical span at residues 123–143 (LGIFNLQPAEVAKLSLFVFIA). Residues 144–155 (GYLVRRHGEVRD) lie on the Cytoplasmic side of the membrane. The chain crosses the membrane as a helical span at residues 156 to 176 (SFRGFVKPLLVLITLAFFLLM). The Periplasmic segment spans residues 177-178 (QP). Residues 179 to 199 (DLGTTVVMFVTTIAMLFIAGA) form a helical membrane-spanning segment. Position 200 (K200) is a topological domain, cytoplasmic. A helical membrane pass occupies residues 201-221 (LWQFIALVMGGISLVIVLILA). Topologically, residues 222 to 290 (EPYRMRRVTS…VFAVIAEELG (69 aa)) are periplasmic. The chain crosses the membrane as a helical span at residues 291-311 (FVGVCLVLCLIFALVFKALLI). The Cytoplasmic portion of the chain corresponds to 312 to 321 (GRKCLAHDQR). Residues 322–342 (FGGFLAFGIGIWFAFQTLVNV) traverse the membrane as a helical segment. The Periplasmic segment spans residues 343–356 (GAAAGIVPTKGLTL). A helical transmembrane segment spans residues 357 to 377 (PLISYGGSSLIIMSVAVSLLI). At 378–400 (RIDHECRVYLANEPPRSENEEQK) the chain is on the cytoplasmic side.

The protein belongs to the SEDS family. FtsW subfamily.

Its subcellular location is the cell inner membrane. It catalyses the reaction [GlcNAc-(1-&gt;4)-Mur2Ac(oyl-L-Ala-gamma-D-Glu-L-Lys-D-Ala-D-Ala)](n)-di-trans,octa-cis-undecaprenyl diphosphate + beta-D-GlcNAc-(1-&gt;4)-Mur2Ac(oyl-L-Ala-gamma-D-Glu-L-Lys-D-Ala-D-Ala)-di-trans,octa-cis-undecaprenyl diphosphate = [GlcNAc-(1-&gt;4)-Mur2Ac(oyl-L-Ala-gamma-D-Glu-L-Lys-D-Ala-D-Ala)](n+1)-di-trans,octa-cis-undecaprenyl diphosphate + di-trans,octa-cis-undecaprenyl diphosphate + H(+). It participates in cell wall biogenesis; peptidoglycan biosynthesis. Functionally, peptidoglycan polymerase that is essential for cell division. This Aliivibrio salmonicida (strain LFI1238) (Vibrio salmonicida (strain LFI1238)) protein is Probable peptidoglycan glycosyltransferase FtsW.